A 539-amino-acid polypeptide reads, in one-letter code: Phosphoenolpyruvate carboxykinase (ATP) (539 aa).

Substrate-binding residues include Arg64, Tyr206, and Lys212. ATP is bound by residues Lys212, His231, and 247 to 255 (GLSGTGKTT). Mn(2+)-binding residues include Lys212 and His231. Asp268 lines the Mn(2+) pocket. ATP-binding positions include Glu296, Arg332, 448 to 449 (RI), and Thr454. Arg332 contributes to the substrate binding site.

It belongs to the phosphoenolpyruvate carboxykinase (ATP) family. As to quaternary structure, monomer. Mn(2+) serves as cofactor.

The protein resides in the cytoplasm. It catalyses the reaction oxaloacetate + ATP = phosphoenolpyruvate + ADP + CO2. It functions in the pathway carbohydrate biosynthesis; gluconeogenesis. Involved in the gluconeogenesis. Catalyzes the conversion of oxaloacetate (OAA) to phosphoenolpyruvate (PEP) through direct phosphoryl transfer between the nucleoside triphosphate and OAA. The polypeptide is Phosphoenolpyruvate carboxykinase (ATP) (Edwardsiella ictaluri (strain 93-146)).